A 483-amino-acid polypeptide reads, in one-letter code: Isocitrate dehydrogenase [NADP] (483 aa).

Residue T74 participates in NADP(+) binding. Positions 83, 85, 89, 99, and 121 each coordinate D-threo-isocitrate. Residue D232 coordinates Mg(2+). NADP(+)-binding positions include 264–270 and N277; that span reads HGSAPDI.

The protein belongs to the isocitrate and isopropylmalate dehydrogenases family. Homodimer. Mg(2+) is required as a cofactor. Mn(2+) serves as cofactor.

It carries out the reaction D-threo-isocitrate + NADP(+) = 2-oxoglutarate + CO2 + NADPH. In terms of biological role, catalyzes the oxidative decarboxylation of isocitrate to 2-oxoglutarate and carbon dioxide with the concomitant reduction of NADP(+). This Rickettsia bellii (strain RML369-C) protein is Isocitrate dehydrogenase [NADP] (icd).